We begin with the raw amino-acid sequence, 444 residues long: N-succinylarginine dihydrolase (444 aa).

Substrate-binding positions include 19–28 (SGLSVGNIAS), Asn-110, and 137–138 (HR). Glu-174 is a catalytic residue. Arg-214 lines the substrate pocket. His-250 is an active-site residue. The substrate site is built by Asp-252 and Asn-362. The active-site Nucleophile is the Cys-368.

The protein belongs to the succinylarginine dihydrolase family. In terms of assembly, homodimer.

It carries out the reaction N(2)-succinyl-L-arginine + 2 H2O + 2 H(+) = N(2)-succinyl-L-ornithine + 2 NH4(+) + CO2. It functions in the pathway amino-acid degradation; L-arginine degradation via AST pathway; L-glutamate and succinate from L-arginine: step 2/5. In terms of biological role, catalyzes the hydrolysis of N(2)-succinylarginine into N(2)-succinylornithine, ammonia and CO(2). The chain is N-succinylarginine dihydrolase from Aliivibrio fischeri (strain ATCC 700601 / ES114) (Vibrio fischeri).